We begin with the raw amino-acid sequence, 539 residues long: Phenylalanine--tRNA ligase beta subunit (539 aa).

Residues 271–347 enclose the B5 domain; sequence LSPARWTVTT…KSYGYENLKA (77 aa). Mg(2+) is bound by residues Asp325, Asp331, Glu334, and Asp335.

Belongs to the phenylalanyl-tRNA synthetase beta subunit family. Type 2 subfamily. As to quaternary structure, tetramer of two alpha and two beta subunits. Mg(2+) serves as cofactor.

The protein resides in the cytoplasm. The catalysed reaction is tRNA(Phe) + L-phenylalanine + ATP = L-phenylalanyl-tRNA(Phe) + AMP + diphosphate + H(+). The sequence is that of Phenylalanine--tRNA ligase beta subunit from Methanothrix thermoacetophila (strain DSM 6194 / JCM 14653 / NBRC 101360 / PT) (Methanosaeta thermophila).